We begin with the raw amino-acid sequence, 579 residues long: MFS-type transporter sphD (579 aa).

Residues 17-62 (SAFAVRAEPDSEPVSEKQGTAETDAETGAGGTEVPAERNGEDDVER) are disordered. Residues 51-62 (PAERNGEDDVER) show a composition bias toward basic and acidic residues. Helical transmembrane passes span 73–93 (AFIGLAASMFVFQVDATALGI), 110–130 (FWANLSYTLCGLVMQPVWASI), 138–158 (PPLYVSMALFFIGSIVFAVAQ), 168–188 (VLQGFGGGGIDVLAEVILADM), 200–220 (LMAIPMAIGNIMGPSVGALFA), 227–247 (WIGWVNLPLLGIGTPLVFFFL), 267–287 (WIGMVLVVVGITIFVLPLSWA), and 294–314 (GAWQTLVPLFLGVAVLVIFAF). Asn-335 is a glycosylation site (N-linked (GlcNAc...) asparagine). 6 helical membrane-spanning segments follow: residues 338–358 (LVGGFLHGAVLVSLLQYLPLI), 367–391 (AILSAVSLLPTVIISVVVAAISMML), 398–419 (YVWILRLAWVILTLGTGLLALF), 429–449 (LGLPILWGAGVALLRLNLLPM), 460–480 (GLAIGQFLTIRMFGGLVGLTI), and 541–561 (FQTIFYTMTGLSGLGLVTSLF).

Belongs to the major facilitator superfamily.

It is found in the membrane. MFS-type transporter; part of the gene cluster that mediates the biosynthesis of sphingofungins, bioactive molecules acting as sphingolipid inhibitors via inhibiting serine palmitoyl transferase (SPT). This Aspergillus fumigatus (strain CBS 144.89 / FGSC A1163 / CEA10) (Neosartorya fumigata) protein is MFS-type transporter sphD.